The sequence spans 356 residues: Probable butyrate kinase (356 aa).

The protein belongs to the acetokinase family.

It is found in the cytoplasm. The catalysed reaction is butanoate + ATP = butanoyl phosphate + ADP. This Clostridium perfringens (strain SM101 / Type A) protein is Probable butyrate kinase.